We begin with the raw amino-acid sequence, 62 residues long: Large ribosomal subunit protein eL37 (62 aa).

Residues C20, C23, C35, and C38 each coordinate Zn(2+). A C4-type zinc finger spans residues 20–38 (CRRCGRRSYNVAKGYCAAC).

The protein belongs to the eukaryotic ribosomal protein eL37 family. Zn(2+) is required as a cofactor.

In terms of biological role, binds to the 23S rRNA. The sequence is that of Large ribosomal subunit protein eL37 (rpl37e) from Aeropyrum pernix (strain ATCC 700893 / DSM 11879 / JCM 9820 / NBRC 100138 / K1).